A 169-amino-acid polypeptide reads, in one-letter code: Succinate dehydrogenase cytochrome b560 subunit, mitochondrial (169 aa).

Residues 1–29 constitute a mitochondrion transit peptide; it reads MAALLLRHVGRHCLRAHLSPQLCIRNAVP. At 30-62 the chain is on the mitochondrial matrix side; that stretch reads LGTTAKEEMERFWSKNTTLNRPLSPHISIYGWS. The chain crosses the membrane as a helical span at residues 63-92; it reads LPMAMSICHRGTGIALSAGVSLFGLSALLV. The Mitochondrial intermembrane segment spans residues 93–112; it reads PGSFESHLEFVKSLCLGPAL. Residues 113–137 form a helical membrane-spanning segment; the sequence is IHTAKFALVFPLMYHTWNGIRHLMW. His127 is a heme b binding site. Residues 138 to 144 are Mitochondrial matrix-facing; sequence DLGKGLT. A helical membrane pass occupies residues 145–166; sequence ISQLHQSGVAVLVLTVLSSVGL. Residues 167-169 are Mitochondrial intermembrane-facing; that stretch reads AAM.

Belongs to the cytochrome b560 family. As to quaternary structure, component of complex II composed of four subunits: the flavoprotein (FP) SDHA, iron-sulfur protein (IP) SDHB, and a cytochrome b560 composed of SDHC and SDHD. Requires heme b as cofactor. In terms of processing, the N-terminus is blocked.

The protein localises to the mitochondrion inner membrane. It participates in carbohydrate metabolism; tricarboxylic acid cycle. Its function is as follows. Membrane-anchoring subunit of succinate dehydrogenase (SDH) that is involved in complex II of the mitochondrial electron transport chain and is responsible for transferring electrons from succinate to ubiquinone (coenzyme Q). SDH also oxidizes malate to the non-canonical enol form of oxaloacetate, enol-oxaloacetate. Enol-oxaloacetate, which is a potent inhibitor of the succinate dehydrogenase activity, is further isomerized into keto-oxaloacetate. The chain is Succinate dehydrogenase cytochrome b560 subunit, mitochondrial (SDHC) from Bos taurus (Bovine).